The primary structure comprises 376 residues: Erythronate-4-phosphate dehydrogenase (376 aa).

The substrate site is built by serine 45 and threonine 67. Residue aspartate 147 participates in NAD(+) binding. The active site involves arginine 209. Aspartate 233 is an NAD(+) binding site. The active site involves glutamate 238. Histidine 255 functions as the Proton donor in the catalytic mechanism. Glycine 258 lines the NAD(+) pocket. Residue tyrosine 259 coordinates substrate.

The protein belongs to the D-isomer specific 2-hydroxyacid dehydrogenase family. PdxB subfamily. In terms of assembly, homodimer.

The protein localises to the cytoplasm. The enzyme catalyses 4-phospho-D-erythronate + NAD(+) = (R)-3-hydroxy-2-oxo-4-phosphooxybutanoate + NADH + H(+). It functions in the pathway cofactor biosynthesis; pyridoxine 5'-phosphate biosynthesis; pyridoxine 5'-phosphate from D-erythrose 4-phosphate: step 2/5. Functionally, catalyzes the oxidation of erythronate-4-phosphate to 3-hydroxy-2-oxo-4-phosphonooxybutanoate. The chain is Erythronate-4-phosphate dehydrogenase from Shewanella baltica (strain OS185).